Reading from the N-terminus, the 417-residue chain is Serine hydroxymethyltransferase 2 (417 aa).

Residues L121 and 125 to 127 each bind (6S)-5,6,7,8-tetrahydrofolate; that span reads GHL. K229 is modified (N6-(pyridoxal phosphate)lysine). A (6S)-5,6,7,8-tetrahydrofolate-binding site is contributed by 354–356; that stretch reads SPF.

This sequence belongs to the SHMT family. Homodimer. It depends on pyridoxal 5'-phosphate as a cofactor.

The protein localises to the cytoplasm. The enzyme catalyses (6R)-5,10-methylene-5,6,7,8-tetrahydrofolate + glycine + H2O = (6S)-5,6,7,8-tetrahydrofolate + L-serine. The protein operates within one-carbon metabolism; tetrahydrofolate interconversion. It functions in the pathway amino-acid biosynthesis; glycine biosynthesis; glycine from L-serine: step 1/1. In terms of biological role, catalyzes the reversible interconversion of serine and glycine with tetrahydrofolate (THF) serving as the one-carbon carrier. This reaction serves as the major source of one-carbon groups required for the biosynthesis of purines, thymidylate, methionine, and other important biomolecules. Also exhibits THF-independent aldolase activity toward beta-hydroxyamino acids, producing glycine and aldehydes, via a retro-aldol mechanism. In Pseudomonas putida (strain ATCC 47054 / DSM 6125 / CFBP 8728 / NCIMB 11950 / KT2440), this protein is Serine hydroxymethyltransferase 2.